The sequence spans 257 residues: Snake venom serine protease serpentokallikrein-2 (257 aa).

The N-terminal stretch at 1-18 (MVLIRVLANLLILQLSYA) is a signal peptide. Residues 19–24 (QKSSEL) constitute a propeptide that is removed on maturation. The 224-residue stretch at 25–248 (VIGGDECNIN…HLDWIKGIIA (224 aa)) folds into the Peptidase S1 domain. 6 cysteine pairs are disulfide-bonded: Cys-31/Cys-162, Cys-49/Cys-65, Cys-97/Cys-255, Cys-141/Cys-209, Cys-173/Cys-188, and Cys-199/Cys-224. His-64 serves as the catalytic Charge relay system. Asn-102 carries an N-linked (GlcNAc...) asparagine glycan. The active-site Charge relay system is Asp-109. Ser-203 functions as the Charge relay system in the catalytic mechanism.

It belongs to the peptidase S1 family. Snake venom subfamily. Monomer. Expressed by the venom gland.

The protein resides in the secreted. Snake venom serine protease that may act in the hemostasis system of the prey. This chain is Snake venom serine protease serpentokallikrein-2, found in Protobothrops mucrosquamatus (Taiwan habu).